The sequence spans 271 residues: 4-hydroxy-tetrahydrodipicolinate reductase (271 aa).

Residues 10–15 (GAGGRM), glutamate 36, 100–102 (GTT), and 124–127 (SGNM) each bind NAD(+). The Proton donor/acceptor role is filled by histidine 157. Histidine 158 is a (S)-2,3,4,5-tetrahydrodipicolinate binding site. Lysine 161 serves as the catalytic Proton donor. (S)-2,3,4,5-tetrahydrodipicolinate is bound at residue 167-168 (GT).

It belongs to the DapB family.

It localises to the cytoplasm. The catalysed reaction is (S)-2,3,4,5-tetrahydrodipicolinate + NAD(+) + H2O = (2S,4S)-4-hydroxy-2,3,4,5-tetrahydrodipicolinate + NADH + H(+). The enzyme catalyses (S)-2,3,4,5-tetrahydrodipicolinate + NADP(+) + H2O = (2S,4S)-4-hydroxy-2,3,4,5-tetrahydrodipicolinate + NADPH + H(+). Its pathway is amino-acid biosynthesis; L-lysine biosynthesis via DAP pathway; (S)-tetrahydrodipicolinate from L-aspartate: step 4/4. In terms of biological role, catalyzes the conversion of 4-hydroxy-tetrahydrodipicolinate (HTPA) to tetrahydrodipicolinate. The polypeptide is 4-hydroxy-tetrahydrodipicolinate reductase (Bradyrhizobium diazoefficiens (strain JCM 10833 / BCRC 13528 / IAM 13628 / NBRC 14792 / USDA 110)).